Here is a 344-residue protein sequence, read N- to C-terminus: GTP 3',8-cyclase (344 aa).

A Radical SAM core domain is found at 19-245 (PFGRAVTYLR…DIPYRTGGPA (227 aa)). Residue R28 participates in GTP binding. C35 and C39 together coordinate [4Fe-4S] cluster. Y41 is an S-adenosyl-L-methionine binding site. [4Fe-4S] cluster is bound at residue C42. R77 provides a ligand contact to GTP. G81 lines the S-adenosyl-L-methionine pocket. A GTP-binding site is contributed by T111. S135 provides a ligand contact to S-adenosyl-L-methionine. Position 171 (K171) interacts with GTP. M205 provides a ligand contact to S-adenosyl-L-methionine. [4Fe-4S] cluster contacts are provided by C268 and C271. 273 to 275 (RVR) is a binding site for GTP. Residue C285 coordinates [4Fe-4S] cluster.

This sequence belongs to the radical SAM superfamily. MoaA family. In terms of assembly, monomer and homodimer. It depends on [4Fe-4S] cluster as a cofactor.

The enzyme catalyses GTP + AH2 + S-adenosyl-L-methionine = (8S)-3',8-cyclo-7,8-dihydroguanosine 5'-triphosphate + 5'-deoxyadenosine + L-methionine + A + H(+). It functions in the pathway cofactor biosynthesis; molybdopterin biosynthesis. Its function is as follows. Catalyzes the cyclization of GTP to (8S)-3',8-cyclo-7,8-dihydroguanosine 5'-triphosphate. The polypeptide is GTP 3',8-cyclase (Brucella melitensis biotype 2 (strain ATCC 23457)).